The sequence spans 160 residues: Dysbindin domain-containing protein 1 (160 aa).

3 positions are modified to phosphoserine: Ser3, Ser97, and Ser121. The disordered stretch occupies residues 95–160 (ADSDDENLAT…FLTVEEPKED (66 aa)). Basic and acidic residues predominate over residues 127–143 (TRAEQNREKQPPSDPER).

The protein belongs to the dysbindin family.

The chain is Dysbindin domain-containing protein 1 (Dbndd1) from Mus musculus (Mouse).